A 396-amino-acid polypeptide reads, in one-letter code: FAD-dependent monooxygenase phomE' (396 aa).

Glutamate 3 is an FAD binding site. Active-site residues include arginine 158 and tyrosine 196. Residues aspartate 277 and glycine 290 each coordinate FAD.

It belongs to the paxM FAD-dependent monooxygenase family. As to quaternary structure, monomer. Requires FAD as cofactor.

Functionally, FAD-dependent monooxygenase; part of the gene cluster that mediates the biosynthesis of the phomopsins, a group of hexapeptide mycotoxins which infects lupins and causes lupinosis disease in livestock. The role of phomE' within the phomopsins biosynthesis pathway has still to be determined. The pathway starts with the processing of the precursor phomA by several endopeptidases including kexin proteases as well as the cluster-specific S41 family peptidase phomP1 and the oligopeptidase phomG to produce 10 identical copies of the hexapeptide Tyr-Val-Ile-Pro-Ile-Asp. After being excised from the precursor peptide, the core peptides are cyclized and modified post-translationally by enzymes encoded within the gene cluster. The timing and order of proteolysis of the phomA precursor and PTMs are still unknown. Two tyrosinase-like enzymes, phomQ1 and phomQ2, catalyze the chlorination and hydroxylation of Tyr, respectively. PhomYb, is proposed to be involved in the construction of the macrocyclic structure. The other 4 ustYa family proteins may be involved in PTMs that generate the unique structure of phomopsin A. PhomYa is required for the hydroxylation of C-beta of Tyr. PhomYc, phomYd, and phomYe are responsible for the biosynthesis of 2,3-dehydroisoleucine (dIle), 2,3-dehydroaspartic acid (dAsp), and 3,4-dehydroproline (dPro), respectively. While dIle formation by phomYc is indispensable for the installation of dAsp by phomYd, the order of the other PTMs have not been elucidated yet. Most of the biosynthetic enzymes likely have broad substrate specificity, and thus, there might be a metabolic grid from a precursor to phomopsin A. The enzyme(s) responsible for the biosynthesis of 3,4-dehydrovaline (dVal) have also not been identified yet. Finally, phomM acts as an S-adenosylmethionine-dependent alpha-N-methyltransferase that catalyzes two successive N-methylation reactions, converting N-desmethyl-phomopsin A to phomopsin A and phomopsin A further to an N,N-dimethylated congener called phomopsin E. The sequence is that of FAD-dependent monooxygenase phomE' from Diaporthe leptostromiformis (Lupinosis disease fungus).